A 91-amino-acid chain; its full sequence is MDIKLINIGFGNIVSAHRVIAIVSPESSPIKRIITEAREKGQLIDATYGRRTRAVIIADSGHVILSAIQPETVANRFLLSRDVHDSSSSPC.

It belongs to the RemA family.

This chain is Putative regulatory protein Cyan7425_4125, found in Cyanothece sp. (strain PCC 7425 / ATCC 29141).